The following is an 85-amino-acid chain: ATP synthase subunit c (85 aa).

2 helical membrane-spanning segments follow: residues 10-30 (IAVA…FGLL) and 53-73 (FIVA…ALFF).

Belongs to the ATPase C chain family. In terms of assembly, F-type ATPases have 2 components, F(1) - the catalytic core - and F(0) - the membrane proton channel. F(1) has five subunits: alpha(3), beta(3), gamma(1), delta(1), epsilon(1). F(0) has three main subunits: a(1), b(2) and c(10-14). The alpha and beta chains form an alternating ring which encloses part of the gamma chain. F(1) is attached to F(0) by a central stalk formed by the gamma and epsilon chains, while a peripheral stalk is formed by the delta and b chains.

Its subcellular location is the cell inner membrane. F(1)F(0) ATP synthase produces ATP from ADP in the presence of a proton or sodium gradient. F-type ATPases consist of two structural domains, F(1) containing the extramembraneous catalytic core and F(0) containing the membrane proton channel, linked together by a central stalk and a peripheral stalk. During catalysis, ATP synthesis in the catalytic domain of F(1) is coupled via a rotary mechanism of the central stalk subunits to proton translocation. Its function is as follows. Key component of the F(0) channel; it plays a direct role in translocation across the membrane. A homomeric c-ring of between 10-14 subunits forms the central stalk rotor element with the F(1) delta and epsilon subunits. The protein is ATP synthase subunit c of Pseudomonas syringae pv. syringae (strain B728a).